Here is a 253-residue protein sequence, read N- to C-terminus: Flap endonuclease Xni (253 aa).

Asp104 is a Mg(2+) binding site. Positions Val160–Asn250 constitute a 5'-3' exonuclease domain. Residues Leu171, Ala172, Pro180, Ile182, and Ile185 each contribute to the K(+) site. An interaction with DNA region spans residues Gly184–Thr189.

This sequence belongs to the Xni family. Requires Mg(2+) as cofactor. It depends on K(+) as a cofactor.

Functionally, has flap endonuclease activity. During DNA replication, flap endonucleases cleave the 5'-overhanging flap structure that is generated by displacement synthesis when DNA polymerase encounters the 5'-end of a downstream Okazaki fragment. The sequence is that of Flap endonuclease Xni from Edwardsiella ictaluri (strain 93-146).